Reading from the N-terminus, the 97-residue chain is MKIRPLHDRVIVKRKEVESKSAGGIVLTGSAAGKSTRGEVVAVGHGRILENGDVKPLDVKVGDTVIFNDGYGVKAEKIDNEEVLIMSESDILAIVEA.

It belongs to the GroES chaperonin family. Heptamer of 7 subunits arranged in a ring. Interacts with the chaperonin GroEL.

The protein localises to the cytoplasm. Functionally, together with the chaperonin GroEL, plays an essential role in assisting protein folding. The GroEL-GroES system forms a nano-cage that allows encapsulation of the non-native substrate proteins and provides a physical environment optimized to promote and accelerate protein folding. GroES binds to the apical surface of the GroEL ring, thereby capping the opening of the GroEL channel. This is Co-chaperonin GroES from Edwardsiella ictaluri (strain 93-146).